Consider the following 288-residue polypeptide: Pantothenate synthetase (288 aa).

Residue 30–37 (MGFLHEGH) participates in ATP binding. His-37 serves as the catalytic Proton donor. A (R)-pantoate-binding site is contributed by Gln-61. Gln-61 serves as a coordination point for beta-alanine. Residue 147-150 (GLKD) participates in ATP binding. Gln-153 lines the (R)-pantoate pocket. ATP is bound by residues Val-176 and 184 to 187 (KSSR).

It belongs to the pantothenate synthetase family. Homodimer.

It is found in the cytoplasm. It carries out the reaction (R)-pantoate + beta-alanine + ATP = (R)-pantothenate + AMP + diphosphate + H(+). It participates in cofactor biosynthesis; (R)-pantothenate biosynthesis; (R)-pantothenate from (R)-pantoate and beta-alanine: step 1/1. In terms of biological role, catalyzes the condensation of pantoate with beta-alanine in an ATP-dependent reaction via a pantoyl-adenylate intermediate. This Bacillus pumilus (strain SAFR-032) protein is Pantothenate synthetase.